Reading from the N-terminus, the 449-residue chain is C4-dicarboxylate transport protein 1 (449 aa).

Transmembrane regions (helical) follow at residues 14–34, 47–67, 83–103, 157–177, 195–215, 226–246, 312–332, 359–379, and 385–405; these read SIFL…VGIP, FIKL…VNGI, SVIY…VVAY, ILQV…VGEQ, IMGM…AFTT, LGAL…AVLG, FSIY…TPLA, VILA…LVLV, and FMGI…TVTI.

The protein belongs to the dicarboxylate/amino acid:cation symporter (DAACS) (TC 2.A.23) family.

The protein localises to the cell inner membrane. Its function is as follows. Responsible for the transport of dicarboxylates such as succinate, fumarate, and malate from the periplasm across the membrane. The sequence is that of C4-dicarboxylate transport protein 1 from Pseudomonas aeruginosa (strain UCBPP-PA14).